The primary structure comprises 238 residues: NAD(P)H-hydrate epimerase (238 aa).

A YjeF N-terminal domain is found at 11 to 217 (AAALDKDLMS…EIHQKYNLQL (207 aa)). 61–65 (NNGGD) serves as a coordination point for (6S)-NADPHX. K(+)-binding residues include Asn62 and Asp123. Residues 127 to 133 (GFSFTGS) and Asp156 contribute to the (6S)-NADPHX site. Ser159 provides a ligand contact to K(+).

It belongs to the NnrE/AIBP family. K(+) serves as cofactor.

It localises to the cytoplasm. The protein localises to the mitochondrion. The enzyme catalyses (6R)-NADHX = (6S)-NADHX. It catalyses the reaction (6R)-NADPHX = (6S)-NADPHX. In terms of biological role, catalyzes the epimerization of the S- and R-forms of NAD(P)HX, a damaged form of NAD(P)H that is a result of enzymatic or heat-dependent hydration. This is a prerequisite for the S-specific NAD(P)H-hydrate dehydratase to allow the repair of both epimers of NAD(P)HX. The sequence is that of NAD(P)H-hydrate epimerase from Sclerotinia sclerotiorum (strain ATCC 18683 / 1980 / Ss-1) (White mold).